Reading from the N-terminus, the 93-residue chain is C-C motif chemokine 17 (93 aa).

Residues 1–23 (MMSLQMLLLAALLLGTSLQHASA) form the signal peptide. Disulfide bonds link cysteine 33-cysteine 57 and cysteine 34-cysteine 73.

This sequence belongs to the intercrine beta (chemokine CC) family.

The protein resides in the secreted. In terms of biological role, chemokine, which displays chemotactic activity for T lymphocytes, preferentially Th2 cells, but not monocytes or granulocytes. Therefore plays an important role in a wide range of inflammatory and immunological processes. Acts by binding to CCR4 at T-cell surface. Mediates GM-CSF/CSF2-driven pain and inflammation. In the brain, required to maintain the typical, highly branched morphology of hippocampal microglia under homeostatic conditions. May be important for the appropriate adaptation of microglial morphology and synaptic plasticity to acute lipopolysaccharide (LPS)-induced neuroinflammation. Plays a role in wound healing, mainly by inducing fibroblast migration into the wound. The chain is C-C motif chemokine 17 (Ccl17) from Rattus norvegicus (Rat).